The following is a 477-amino-acid chain: MDLVTRRIRGALGIAGPLLFLEGVPRARLGEVVRIRGEPEAHGRAAEERSGQVIALSRDRIAVQVLEETRGLAPARAEVTLTGQVARLGVSRGMLGRVLDGLGRPADGLPPPVPEARPAIHGAALNVTRREKPSDFIETGVSAIDGMNTLVRGQKLPVFSCAGLPASRLAAQIVCQARVRGGEPFAVVFAAMGSPFREYHAFLDAFRAAGVLDRTVVFLNRAEDPPIERLMTPRCALTCAEHLAFAHGLHVLVVLTDVTSYCEALREVALAREEVPGRRGYPGYMYTDLATIFERAGRVRGRPGSLTQLPVLTMPDDDLTHPIPDLTGYITEGQIVLSRDLDRRGVYPPIDVLPSLSRLMGLGAGPGKTRDDHRPVADQLYAFYARGRDVRRMAAIVGAANLGEEEKRLLAFADAFEDELVGQGGTFRTIEDTLEAGWRLLSGFPPAALTRIPERLLRARPARPAAGAAALSGGAVA.

This sequence belongs to the ATPase alpha/beta chains family.

In terms of biological role, produces ATP from ADP in the presence of a proton gradient across the membrane. The V-type beta chain is a regulatory subunit. This Anaeromyxobacter sp. (strain K) protein is V-type ATP synthase beta chain.